Reading from the N-terminus, the 97-residue chain is YcgL domain-containing protein CPS_3517 (97 aa).

The YcgL domain maps to 1-85 (MLCAIYKSAR…PQEDLLKEHK (85 aa)).

The polypeptide is YcgL domain-containing protein CPS_3517 (Colwellia psychrerythraea (strain 34H / ATCC BAA-681) (Vibrio psychroerythus)).